The following is a 551-amino-acid chain: Arginine--tRNA ligase (551 aa).

The short motif at 123–133 (ANPTGPLTIGR) is the 'HIGH' region element.

This sequence belongs to the class-I aminoacyl-tRNA synthetase family. In terms of assembly, monomer.

The protein resides in the cytoplasm. It carries out the reaction tRNA(Arg) + L-arginine + ATP = L-arginyl-tRNA(Arg) + AMP + diphosphate. The polypeptide is Arginine--tRNA ligase (Chlorobaculum parvum (strain DSM 263 / NCIMB 8327) (Chlorobium vibrioforme subsp. thiosulfatophilum)).